The primary structure comprises 132 residues: Large ribosomal subunit protein uL24 (132 aa).

This sequence belongs to the universal ribosomal protein uL24 family. In terms of assembly, part of the 50S ribosomal subunit.

In terms of biological role, one of two assembly initiator proteins, it binds directly to the 5'-end of the 23S rRNA, where it nucleates assembly of the 50S subunit. One of the proteins that surrounds the polypeptide exit tunnel on the outside of the subunit. The polypeptide is Large ribosomal subunit protein uL24 (Synechococcus sp. (strain JA-3-3Ab) (Cyanobacteria bacterium Yellowstone A-Prime)).